A 330-amino-acid chain; its full sequence is Tryptophan--tRNA ligase (330 aa).

ATP-binding positions include 10–12 and 18–19; these read QPS and GN. The 'HIGH' region motif lies at 11–19; the sequence is PSGTLTLGN. Position 133 (Asp-133) interacts with L-tryptophan. Residues 145 to 147, Ile-184, and 193 to 197 contribute to the ATP site; these read GED and KMSKS. Residues 193-197 carry the 'KMSKS' region motif; that stretch reads KMSKS.

Belongs to the class-I aminoacyl-tRNA synthetase family. As to quaternary structure, homodimer.

It localises to the cytoplasm. It carries out the reaction tRNA(Trp) + L-tryptophan + ATP = L-tryptophyl-tRNA(Trp) + AMP + diphosphate + H(+). In terms of biological role, catalyzes the attachment of tryptophan to tRNA(Trp). This is Tryptophan--tRNA ligase from Halalkalibacterium halodurans (strain ATCC BAA-125 / DSM 18197 / FERM 7344 / JCM 9153 / C-125) (Bacillus halodurans).